Consider the following 394-residue polypeptide: Elongation factor Tu 2 (394 aa).

The region spanning 10-204 (KPHVNVGTIG…ALDTYIPEPE (195 aa)) is the tr-type G domain. A G1 region spans residues 19-26 (GHVDHGKT). GTP is bound at residue 19–26 (GHVDHGKT). T26 is a Mg(2+) binding site. Residues 60–64 (GITIS) form a G2 region. Residues 81–84 (DCPG) are G3. Residues 81–85 (DCPGH) and 136–139 (NKCD) each bind GTP. A G4 region spans residues 136–139 (NKCD). The tract at residues 174–176 (SAL) is G5.

It belongs to the TRAFAC class translation factor GTPase superfamily. Classic translation factor GTPase family. EF-Tu/EF-1A subfamily. Monomer.

The protein localises to the cytoplasm. It catalyses the reaction GTP + H2O = GDP + phosphate + H(+). GTP hydrolase that promotes the GTP-dependent binding of aminoacyl-tRNA to the A-site of ribosomes during protein biosynthesis. This Vibrio vulnificus (strain CMCP6) protein is Elongation factor Tu 2.